Here is a 377-residue protein sequence, read N- to C-terminus: Leukocyte elastase inhibitor (377 aa).

M1 carries the post-translational modification N-acetylmethionine.

The protein belongs to the serpin family. Ov-serpin subfamily.

The protein localises to the cytoplasm. In terms of biological role, regulates the activity of the neutrophil proteases. The polypeptide is Leukocyte elastase inhibitor (serpinb1) (Xenopus laevis (African clawed frog)).